The following is a 58-amino-acid chain: Small ribosomal subunit protein bS21 (58 aa).

The disordered stretch occupies residues 39-58 (DKPSVKKRAKSKAAAKYRSR). The segment covering 43–58 (VKKRAKSKAAAKYRSR) has biased composition (basic residues).

Belongs to the bacterial ribosomal protein bS21 family.

The sequence is that of Small ribosomal subunit protein bS21 (rpsU) from Chlamydia pneumoniae (Chlamydophila pneumoniae).